The sequence spans 442 residues: Proline--tRNA ligase (442 aa).

The protein belongs to the class-II aminoacyl-tRNA synthetase family. ProS type 2 subfamily. As to quaternary structure, homodimer.

Its subcellular location is the cytoplasm. The catalysed reaction is tRNA(Pro) + L-proline + ATP = L-prolyl-tRNA(Pro) + AMP + diphosphate. Functionally, catalyzes the attachment of proline to tRNA(Pro) in a two-step reaction: proline is first activated by ATP to form Pro-AMP and then transferred to the acceptor end of tRNA(Pro). In Brucella melitensis biotype 2 (strain ATCC 23457), this protein is Proline--tRNA ligase.